Reading from the N-terminus, the 330-residue chain is Beta-ketoacyl-[acyl-carrier-protein] synthase III (330 aa).

Catalysis depends on residues C114 and H257. The segment at 258–262 (QANLR) is ACP-binding. Residue N287 is part of the active site.

The protein belongs to the thiolase-like superfamily. FabH family. Homodimer.

The protein localises to the cytoplasm. The enzyme catalyses malonyl-[ACP] + acetyl-CoA + H(+) = 3-oxobutanoyl-[ACP] + CO2 + CoA. It functions in the pathway lipid metabolism; fatty acid biosynthesis. Catalyzes the condensation reaction of fatty acid synthesis by the addition to an acyl acceptor of two carbons from malonyl-ACP. Catalyzes the first condensation reaction which initiates fatty acid synthesis and may therefore play a role in governing the total rate of fatty acid production. Possesses both acetoacetyl-ACP synthase and acetyl transacylase activities. Its substrate specificity determines the biosynthesis of branched-chain and/or straight-chain of fatty acids. The sequence is that of Beta-ketoacyl-[acyl-carrier-protein] synthase III from Oleidesulfovibrio alaskensis (strain ATCC BAA-1058 / DSM 17464 / G20) (Desulfovibrio alaskensis).